The primary structure comprises 376 residues: Thiol-disulfide oxidoreductase LTO1 (376 aa).

The transit peptide at 1 to 45 (MMARFVSVSSCQFHFGFREVSPPSVTSYPRRFEVSDRRFPAIPIK) directs the protein to the chloroplast. The interval 44–77 (IKCSSSEPENGEDSAPSLSSSSSSSTSEVSTSNS) is disordered. Over 46–81 (CSSSEPENGEDSAPSLSSSSSSSTSEVSTSNSSTYN) the chain is Stromal. Over residues 57–77 (SAPSLSSSSSSSTSEVSTSNS) the composition is skewed to low complexity. Residues 82–102 (WYTGIGGIGMLDTAYLTYLKV) form a helical membrane-spanning segment. Over 103 to 125 (TGSDAFCPIGGGTCGDVLNSDYA) the chain is Lumenal. Residues cysteine 109 and cysteine 116 are joined by a disulfide bond. The chain crosses the membrane as a helical span at residues 126–146 (VVFGVPLPVIGFVMYGVVTAL). Topologically, residues 147–165 (SAELGEGNLPFGISKSNGR) are stromal. Residues 166–186 (FALFGITTAMASASAYFLYIL) traverse the membrane as a helical segment. Residues 187-192 (STKLSG) lie on the Lumenal side of the membrane. Residues 193–213 (SSCLYCLVSAFLSFSLFFLSV) form a helical membrane-spanning segment. A disulfide bridge connects residues cysteine 195 and cysteine 198. Residues 214–223 (KDVKLQEIQQ) are Stromal-facing. Residues 224-244 (VVGLQICLAIIVVASLTASYS) form a helical membrane-spanning segment. The Lumenal segment spans residues 245–376 (TAQPIPSRSG…DQANETNQLQ (132 aa)). 2 disulfides stabilise this stretch: cysteine 293–cysteine 296 and cysteine 316–cysteine 331.

Belongs to the VKOR family. As to quaternary structure, interacts with the PSII subunits PSBO1 and PSBO2. Interacts with TL17, TL20.3, HCF164, PETJ, VDE1, EDA3, FKBP13 and FKBP20-2. As to expression, expressed in cotyledons, rosette leaves, stems, cauline leaves and flowers.

It localises to the plastid. The protein localises to the chloroplast thylakoid membrane. Thiol-disulfide oxidoreductase catalyzing disulfide bond formation of chloroplast proteins and involved in redox regulation and photosynthetic electron transport. Required for the assembly of photosystem II (PSII) through the formation of disulfide bond in PSBO, a subunit of the PSII oxygen-evolving complex in the thylakoid lumen. Involved in the formation of disulfide bonds in the lumenal protein FKBP13. In vitro, reduces phylloquinone (vitamin K1) and menaquinone (vitamin K2) to their respective quinol. Cannot reduce phylloquinone epoxide to phylloquinone. Plays an important role in regulating the thylakoid lumen redox. The chain is Thiol-disulfide oxidoreductase LTO1 from Arabidopsis thaliana (Mouse-ear cress).